Consider the following 658-residue polypeptide: MTSREQLVQHVLQELQEAVESEGLEGLVGAALEAKQVLSSFALPTRRGGGPGPQVLEVDSVALSLYPEDAPRNMLPLVCQGEGSLLFEAASLLLWGDAGLSLELRARTVVEMLLHRHYYLQGMIDSKVMLQAVRYSLRSEESPEMTSLPSATLEAIFDADVKATCFPSSFSNVWHLYALASVVQRNIYSIYPLRNLKIRPYFNRVIRPRRCDHTPATLHIMWAGQPLSGHLFRHQYFAPVVGLEEVEAESAHPGPAPLPPPAKTLELLNREPGLSYSHLGEHSSVTKSTFYRWRRQSQEHRQKVATRFSAKHFLQDSFHRGGVVPLQQFLQRFPEISRSTYYAWKHELVGSGACQALTPTEELTKLPERQVAEGLGCSSTAASSPGVVFMQRAKLYLEHCIALNTLVPYRCFKRRFPGISRSTYYNWRRKALRRNPSFKPVPALLESGPPQPVPVGEKALLPWKGGEVGEGAAKATGGGPPAPRAFLPLRVPLSRWQRRLRRAARKQVLGGHLPFCRFRLRYPSLSPSSFWVWKSLARSWPGSLSKLHIPAPTLGRGSRKEAEEKEAGRNVIAAVAPPEGTWPMAASPGQDPNGQVLVMDMLATTKFKAQAKLFLQKRFQSKSFPSYKEFSTLFPLTARSTYYMWKRALYDGLTLVDG.

The protein belongs to the vertnin family.

The protein resides in the nucleus. Functionally, acts as a transcription factor that regulates development of thoracic vertebrae. In Bos taurus (Bovine), this protein is Vertnin (VRTN).